The primary structure comprises 227 residues: PKHD-type hydroxylase Bcep18194_B0892 (227 aa).

One can recognise a Fe2OG dioxygenase domain in the interval 78–178 (KVFPPLFNRY…RVASFFWIQS (101 aa)). Residues His-96, Asp-98, and His-159 each contribute to the Fe cation site. 2-oxoglutarate is bound at residue Arg-169.

Requires Fe(2+) as cofactor. The cofactor is L-ascorbate.

The polypeptide is PKHD-type hydroxylase Bcep18194_B0892 (Burkholderia lata (strain ATCC 17760 / DSM 23089 / LMG 22485 / NCIMB 9086 / R18194 / 383)).